Reading from the N-terminus, the 462-residue chain is Argininosuccinate lyase (462 aa).

The protein belongs to the lyase 1 family. Argininosuccinate lyase subfamily.

The protein resides in the cytoplasm. The catalysed reaction is 2-(N(omega)-L-arginino)succinate = fumarate + L-arginine. It functions in the pathway amino-acid biosynthesis; L-arginine biosynthesis; L-arginine from L-ornithine and carbamoyl phosphate: step 3/3. The polypeptide is Argininosuccinate lyase (Methylobacterium sp. (strain 4-46)).